The following is a 119-amino-acid chain: MARVKRGVTAHAKHKKVYKAAEGFRGRRKNTIRAAKAAVDKAQQYAYVGRKLKKRNFRALWIQRINAAVRPFGLTYSRFINGLAKSGVVIDRKVLSDLAIHEPAAFQAIAEKAKAALAA.

Belongs to the bacterial ribosomal protein bL20 family.

In terms of biological role, binds directly to 23S ribosomal RNA and is necessary for the in vitro assembly process of the 50S ribosomal subunit. It is not involved in the protein synthesizing functions of that subunit. In Afipia carboxidovorans (strain ATCC 49405 / DSM 1227 / KCTC 32145 / OM5) (Oligotropha carboxidovorans), this protein is Large ribosomal subunit protein bL20.